Consider the following 238-residue polypeptide: Ribonuclease PH (238 aa).

Phosphate-binding positions include Arg-86 and 124 to 126; that span reads GTR.

Belongs to the RNase PH family. In terms of assembly, homohexameric ring arranged as a trimer of dimers.

The enzyme catalyses tRNA(n+1) + phosphate = tRNA(n) + a ribonucleoside 5'-diphosphate. Its function is as follows. Phosphorolytic 3'-5' exoribonuclease that plays an important role in tRNA 3'-end maturation. Removes nucleotide residues following the 3'-CCA terminus of tRNAs; can also add nucleotides to the ends of RNA molecules by using nucleoside diphosphates as substrates, but this may not be physiologically important. Probably plays a role in initiation of 16S rRNA degradation (leading to ribosome degradation) during starvation. The polypeptide is Ribonuclease PH (Pectobacterium atrosepticum (strain SCRI 1043 / ATCC BAA-672) (Erwinia carotovora subsp. atroseptica)).